Here is a 105-residue protein sequence, read N- to C-terminus: Ferredoxin--nitrite reductase, chloroplastic (105 aa).

Positions 28 and 32 each coordinate [4Fe-4S] cluster. Siroheme is bound at residue C32.

It belongs to the nitrite and sulfite reductase 4Fe-4S domain family. As to quaternary structure, monomer. Siroheme is required as a cofactor. [4Fe-4S] cluster serves as cofactor. As to expression, highest expression in roots and hypocotyls. Some expression in cotyledonary whorls.

The protein localises to the plastid. The protein resides in the chloroplast. The enzyme catalyses 6 oxidized [2Fe-2S]-[ferredoxin] + NH4(+) + 2 H2O = nitrite + 6 reduced [2Fe-2S]-[ferredoxin] + 8 H(+). It participates in nitrogen metabolism; nitrate reduction (assimilation). The sequence is that of Ferredoxin--nitrite reductase, chloroplastic (NIR) from Pinus sylvestris (Scotch pine).